A 209-amino-acid chain; its full sequence is Large ribosomal subunit protein uL4 (209 aa).

Positions 46–76 are disordered; that stretch reads RGTASTKTRGEVSGGGRKPWRQKGTGRARHG. Over residues 63-76 the composition is skewed to basic residues; that stretch reads KPWRQKGTGRARHG.

It belongs to the universal ribosomal protein uL4 family. As to quaternary structure, part of the 50S ribosomal subunit.

In terms of biological role, one of the primary rRNA binding proteins, this protein initially binds near the 5'-end of the 23S rRNA. It is important during the early stages of 50S assembly. It makes multiple contacts with different domains of the 23S rRNA in the assembled 50S subunit and ribosome. Its function is as follows. Forms part of the polypeptide exit tunnel. The chain is Large ribosomal subunit protein uL4 from Halothermothrix orenii (strain H 168 / OCM 544 / DSM 9562).